The sequence spans 469 residues: Probable indole-3-acetic acid-amido synthetase GH3.13 (469 aa).

Positions 1 to 26 (MTSTSSENAPDHDHDHDASSPAPATA) are disordered. Residues 9–18 (APDHDHDHDA) are compositionally biased toward basic and acidic residues.

It belongs to the IAA-amido conjugating enzyme family.

Its function is as follows. May catalyze the synthesis of indole-3-acetic acid (IAA)-amino acid conjugates, providing a mechanism for the plant to cope with the presence of excess auxin. The polypeptide is Probable indole-3-acetic acid-amido synthetase GH3.13 (GH3.13) (Oryza sativa subsp. japonica (Rice)).